A 298-amino-acid polypeptide reads, in one-letter code: MLYDQIATNKRRTGYVMFGFGVLTLAIGAALGYLFWNSWVSGTVIAAVVAVVYMLIMISQSTNVVMSMNHAREIKDVSQAPQLWHLIEDMALVAQVPMPRVFIIDDPSPNAFATGNDPKHAAVAVTTGIMERLNREELEGVIGHEMSHVRNYDIRLQTIALALSAAIGLLVNFASNWFWWGGATRRRDDRDDSAGNIIGLVISIFLIILAPLAASIAQMALSRNREYLADASSVELTRNPQGLINALRKIDDSQPMKAADPNSAALYISDPFKHKQKFADLFATHPPIADRIARLEKM.

The next 2 membrane-spanning stretches (helical) occupy residues 16 to 36 (VMFG…YLFW) and 38 to 58 (SWVS…LIMI). Position 144 (His144) interacts with Zn(2+). Residue Glu145 is part of the active site. Zn(2+) is bound at residue His148. 2 helical membrane passes run 159-179 (IALA…NWFW) and 197-217 (IIGL…ASIA). Glu226 is a Zn(2+) binding site.

This sequence belongs to the peptidase M48B family. Zn(2+) serves as cofactor.

The protein localises to the cell membrane. This Levilactobacillus brevis (strain ATCC 367 / BCRC 12310 / CIP 105137 / JCM 1170 / LMG 11437 / NCIMB 947 / NCTC 947) (Lactobacillus brevis) protein is Protease HtpX homolog.